A 239-amino-acid polypeptide reads, in one-letter code: Large ribosomal subunit protein uL2 (239 aa).

Disordered regions lie at residues 1–21 (MGKSLIQQRRGKGSPTFKSPS) and 203–239 (PFGGKEHHPGKPTTTSRRAPPGRKVGHIAARRTGRRK). The span at 222–239 (PPGRKVGHIAARRTGRRK) shows a compositional bias: basic residues.

It belongs to the universal ribosomal protein uL2 family. In terms of assembly, part of the 50S ribosomal subunit. Forms a bridge to the 30S subunit in the 70S ribosome.

In terms of biological role, one of the primary rRNA binding proteins. Required for association of the 30S and 50S subunits to form the 70S ribosome, for tRNA binding and peptide bond formation. It has been suggested to have peptidyltransferase activity; this is somewhat controversial. Makes several contacts with the 16S rRNA in the 70S ribosome. This chain is Large ribosomal subunit protein uL2, found in Pyrococcus furiosus (strain ATCC 43587 / DSM 3638 / JCM 8422 / Vc1).